The sequence spans 64 residues: Large ribosomal subunit protein bL35 (64 aa).

A disordered region spans residues 1–44; sequence MPKLKTNRGAAKRFKVKASGRISRARSNHSHILTKKDPKRKRRL. Residues 10 to 44 show a composition bias toward basic residues; sequence AAKRFKVKASGRISRARSNHSHILTKKDPKRKRRL.

The protein belongs to the bacterial ribosomal protein bL35 family.

The polypeptide is Large ribosomal subunit protein bL35 (Halorhodospira halophila (strain DSM 244 / SL1) (Ectothiorhodospira halophila (strain DSM 244 / SL1))).